We begin with the raw amino-acid sequence, 189 residues long: Large ribosomal subunit protein uL13 (189 aa).

The protein belongs to the universal ribosomal protein uL13 family.

This chain is Large ribosomal subunit protein uL13 (rpl13a), found in Salmo trutta (Brown trout).